The following is a 593-amino-acid chain: Glutamyl-tRNA(Gln) amidotransferase subunit B, mitochondrial (593 aa).

A mitochondrion-targeting transit peptide spans 1 to 49; that stretch reads MLRPWLRQSTRAARSLPCCQCPRPYSSRLPTLTSPSSSVRRLQTSASES. Positions 27-42 are enriched in low complexity; that stretch reads SRLPTLTSPSSSVRRL. Positions 27–80 are disordered; the sequence is SRLPTLTSPSSSVRRLQTSASESQDRVPLRKQLKQNAKALKAEKRQRRESEEAS. The segment covering 66 to 80 has biased composition (basic and acidic residues); the sequence is LKAEKRQRRESEEAS.

Belongs to the GatB/GatE family. GatB subfamily. Subunit of the heterotrimeric GatCAB amidotransferase (AdT) complex, composed of A, B and C subunits.

The protein resides in the mitochondrion. The catalysed reaction is L-glutamyl-tRNA(Gln) + L-glutamine + ATP + H2O = L-glutaminyl-tRNA(Gln) + L-glutamate + ADP + phosphate + H(+). Its function is as follows. Allows the formation of correctly charged Gln-tRNA(Gln) through the transamidation of misacylated Glu-tRNA(Gln) in the mitochondria. The reaction takes place in the presence of glutamine and ATP through an activated gamma-phospho-Glu-tRNA(Gln). The sequence is that of Glutamyl-tRNA(Gln) amidotransferase subunit B, mitochondrial from Aspergillus oryzae (strain ATCC 42149 / RIB 40) (Yellow koji mold).